The chain runs to 253 residues: Endonuclease NucS (253 aa).

Residues 63–91 (IDDPDTDFTDGSSVGNSEEQGTDGSAHTA) are disordered. The segment covering 71 to 87 (TDGSSVGNSEEQGTDGS) has biased composition (polar residues).

It belongs to the NucS endonuclease family.

The protein resides in the cytoplasm. In terms of biological role, cleaves both 3' and 5' ssDNA extremities of branched DNA structures. The sequence is that of Endonuclease NucS from Corynebacterium kroppenstedtii (strain DSM 44385 / JCM 11950 / CIP 105744 / CCUG 35717).